A 202-amino-acid polypeptide reads, in one-letter code: Hydrogenase expression/formation protein HupD (202 aa).

Ni(2+) is bound by residues E28, D74, and H105.

This sequence belongs to the peptidase A31 family.

In terms of biological role, not known. Could be involved in the processing of hydrogenase. This chain is Hydrogenase expression/formation protein HupD (hupD), found in Rhizobium leguminosarum bv. viciae.